Consider the following 127-residue polypeptide: Small ribosomal subunit protein bS6 (127 aa).

It belongs to the bacterial ribosomal protein bS6 family.

Binds together with bS18 to 16S ribosomal RNA. In Sulfurovum sp. (strain NBC37-1), this protein is Small ribosomal subunit protein bS6.